We begin with the raw amino-acid sequence, 418 residues long: Gamma-glutamyl phosphate reductase (418 aa).

This sequence belongs to the gamma-glutamyl phosphate reductase family.

It localises to the cytoplasm. The catalysed reaction is L-glutamate 5-semialdehyde + phosphate + NADP(+) = L-glutamyl 5-phosphate + NADPH + H(+). It functions in the pathway amino-acid biosynthesis; L-proline biosynthesis; L-glutamate 5-semialdehyde from L-glutamate: step 2/2. Functionally, catalyzes the NADPH-dependent reduction of L-glutamate 5-phosphate into L-glutamate 5-semialdehyde and phosphate. The product spontaneously undergoes cyclization to form 1-pyrroline-5-carboxylate. The protein is Gamma-glutamyl phosphate reductase of Chlorobium limicola (strain DSM 245 / NBRC 103803 / 6330).